The sequence spans 272 residues: Eukaryotic translation initiation factor 3 subunit G (272 aa).

2 disordered regions span residues 1–28 (MPAL…PTEI) and 143–187 (AGKA…RGRD). An RRM domain is found at 190-268 (TAIRISNLSE…LILNVEWSKP (79 aa)).

Belongs to the eIF-3 subunit G family. In terms of assembly, component of the eukaryotic translation initiation factor 3 (eIF-3) complex.

The protein localises to the cytoplasm. Functionally, RNA-binding component of the eukaryotic translation initiation factor 3 (eIF-3) complex, which is involved in protein synthesis of a specialized repertoire of mRNAs and, together with other initiation factors, stimulates binding of mRNA and methionyl-tRNAi to the 40S ribosome. The eIF-3 complex specifically targets and initiates translation of a subset of mRNAs involved in cell proliferation. This subunit can bind 18S rRNA. This Culex quinquefasciatus (Southern house mosquito) protein is Eukaryotic translation initiation factor 3 subunit G.